The sequence spans 338 residues: RNA 3'-terminal phosphate cyclase (338 aa).

ATP contacts are provided by residues glutamine 103 and 283–287 (YLADQ). Histidine 308 (tele-AMP-histidine intermediate) is an active-site residue.

It belongs to the RNA 3'-terminal cyclase family. Type 1 subfamily.

The protein resides in the cytoplasm. The enzyme catalyses a 3'-end 3'-phospho-ribonucleotide-RNA + ATP = a 3'-end 2',3'-cyclophospho-ribonucleotide-RNA + AMP + diphosphate. In terms of biological role, catalyzes the conversion of 3'-phosphate to a 2',3'-cyclic phosphodiester at the end of RNA. The mechanism of action of the enzyme occurs in 3 steps: (A) adenylation of the enzyme by ATP; (B) transfer of adenylate to an RNA-N3'P to produce RNA-N3'PP5'A; (C) and attack of the adjacent 2'-hydroxyl on the 3'-phosphorus in the diester linkage to produce the cyclic end product. The biological role of this enzyme is unknown but it is likely to function in some aspects of cellular RNA processing. The sequence is that of RNA 3'-terminal phosphate cyclase from Escherichia coli O45:K1 (strain S88 / ExPEC).